The chain runs to 164 residues: Endoribonuclease YbeY (164 aa).

3 residues coordinate Zn(2+): His-124, His-128, and His-134.

It belongs to the endoribonuclease YbeY family. Requires Zn(2+) as cofactor.

It localises to the cytoplasm. Its function is as follows. Single strand-specific metallo-endoribonuclease involved in late-stage 70S ribosome quality control and in maturation of the 3' terminus of the 16S rRNA. This chain is Endoribonuclease YbeY, found in Nitrosomonas europaea (strain ATCC 19718 / CIP 103999 / KCTC 2705 / NBRC 14298).